The following is a 159-amino-acid chain: Aspartate carbamoyltransferase regulatory chain (159 aa).

Residues Cys111, Cys116, Cys141, and Cys144 each contribute to the Zn(2+) site.

Belongs to the PyrI family. In terms of assembly, contains catalytic and regulatory chains. Requires Zn(2+) as cofactor.

In terms of biological role, involved in allosteric regulation of aspartate carbamoyltransferase. The chain is Aspartate carbamoyltransferase regulatory chain from Aeropyrum pernix (strain ATCC 700893 / DSM 11879 / JCM 9820 / NBRC 100138 / K1).